The primary structure comprises 202 residues: NADH-quinone oxidoreductase subunit C (202 aa).

Belongs to the complex I 30 kDa subunit family. In terms of assembly, NDH-1 is composed of 14 different subunits. Subunits NuoB, C, D, E, F, and G constitute the peripheral sector of the complex.

It is found in the cell inner membrane. The catalysed reaction is a quinone + NADH + 5 H(+)(in) = a quinol + NAD(+) + 4 H(+)(out). Its function is as follows. NDH-1 shuttles electrons from NADH, via FMN and iron-sulfur (Fe-S) centers, to quinones in the respiratory chain. The immediate electron acceptor for the enzyme in this species is believed to be ubiquinone. Couples the redox reaction to proton translocation (for every two electrons transferred, four hydrogen ions are translocated across the cytoplasmic membrane), and thus conserves the redox energy in a proton gradient. This is NADH-quinone oxidoreductase subunit C from Acidovorax sp. (strain JS42).